The chain runs to 124 residues: Fluoride-specific ion channel FluC (124 aa).

4 consecutive transmembrane segments (helical) span residues 4–24 (VLYI…LSGW), 32–52 (AFPY…GLIM), 67–87 (IGLT…SYET), and 101–121 (ANVL…IIVA). 2 residues coordinate Na(+): Gly75 and Thr78.

Belongs to the fluoride channel Fluc/FEX (TC 1.A.43) family.

Its subcellular location is the cell inner membrane. The catalysed reaction is fluoride(in) = fluoride(out). Its activity is regulated as follows. Na(+) is not transported, but it plays an essential structural role and its presence is essential for fluoride channel function. Functionally, fluoride-specific ion channel. Important for reducing fluoride concentration in the cell, thus reducing its toxicity. The polypeptide is Fluoride-specific ion channel FluC (Geotalea uraniireducens (strain Rf4) (Geobacter uraniireducens)).